An 80-amino-acid polypeptide reads, in one-letter code: Regulatory protein HrpD6 (80 aa).

Functionally, involved in the regulation of several genes of the hrp-hrc-hpa cluster, which encodes a type III secretion system (T3SS). Upregulates the expression of hpa2, hpa1 and hpaB and partially controls the expression of hrcC and hrcT. Controls the secretion of the T3SS TAL effector AvrXa27. Also regulates the expression of several HrpX-regulated protein (Xrp) genes. Has no influence on hrpG or hrpX expression. The protein is Regulatory protein HrpD6 of Xanthomonas oryzae pv. oryzicola.